Reading from the N-terminus, the 402-residue chain is Imidazolonepropionase (402 aa).

The Fe(3+) site is built by His66 and His68. Residues His66 and His68 each contribute to the Zn(2+) site. 4-imidazolone-5-propanoate-binding residues include Arg75, Tyr138, and His171. Residue Tyr138 coordinates N-formimidoyl-L-glutamate. His236 contributes to the Fe(3+) binding site. His236 lines the Zn(2+) pocket. Position 239 (Gln239) interacts with 4-imidazolone-5-propanoate. Position 311 (Asp311) interacts with Fe(3+). Position 311 (Asp311) interacts with Zn(2+). N-formimidoyl-L-glutamate is bound by residues Asn313 and Gly315. Thr316 lines the 4-imidazolone-5-propanoate pocket.

Belongs to the metallo-dependent hydrolases superfamily. HutI family. Zn(2+) serves as cofactor. The cofactor is Fe(3+).

It is found in the cytoplasm. It catalyses the reaction 4-imidazolone-5-propanoate + H2O = N-formimidoyl-L-glutamate. It participates in amino-acid degradation; L-histidine degradation into L-glutamate; N-formimidoyl-L-glutamate from L-histidine: step 3/3. Functionally, catalyzes the hydrolytic cleavage of the carbon-nitrogen bond in imidazolone-5-propanoate to yield N-formimidoyl-L-glutamate. It is the third step in the universal histidine degradation pathway. This chain is Imidazolonepropionase, found in Pseudomonas aeruginosa (strain ATCC 15692 / DSM 22644 / CIP 104116 / JCM 14847 / LMG 12228 / 1C / PRS 101 / PAO1).